We begin with the raw amino-acid sequence, 478 residues long: MNSLMNDDMVKIIRNGLSASQHPKHILVIGAGLSGLVSASLLKNAGHRVTILEASGRAGGRVCTLRSPFSDDLYFNAGPMRIPNNHSLTLEYIKKFKLPTNVFINRTPMDIIYANGIKTRLQVFERAPGILRYPVAPNEQGKTSEELMLSLLQPILNFINQNPARNWRIVEEQYKNHSLSSFLNTYFSYGAIDMIGVLLDMEAYMGMSLVEVLRESIFFSSPAHFYEITGGMDLLPHAFLPQLKTNILYHQKMMKMSQGENRVTIHCQHQQTAEFTSFTADLAIVTIPFSTLRFVKVEPYHSFSYYKRRAIRELNYISATKIGIEFKSRFWEKAGQHGGKSITDLPIRFSYYPSRNIGANGHAVILASYTWADEALIWDSLSEGERIQYTLLNLSEIYGDIVWSEFVSGTSFSWSQYPYSAGGFTAFEPGQELELYPYIPVPEGRVHFAGEHASLTHAWMQGAIESGIRVAYEVNRLP.

FAD is bound by residues Ser-34, Glu-53, Arg-61, and 80–81; that span reads MR. Arg-81 and Tyr-369 together coordinate substrate. FAD-binding positions include Glu-451 and 460 to 463; that span reads MQGA.

It belongs to the flavin monoamine oxidase family. FIG1 subfamily. FAD serves as cofactor.

It catalyses the reaction an L-alpha-amino acid + O2 + H2O = a 2-oxocarboxylate + H2O2 + NH4(+). The sequence is that of Putative L-amino-acid oxidase YobN (yobN) from Bacillus subtilis (strain 168).